A 161-amino-acid polypeptide reads, in one-letter code: Putative HTH-type transcriptional regulator MT1325 (161 aa).

Residues 2–132 (RMSAKAEYAV…EETTLADVAG (131 aa)) enclose the HTH rrf2-type domain.

In Mycobacterium tuberculosis (strain CDC 1551 / Oshkosh), this protein is Putative HTH-type transcriptional regulator MT1325.